Reading from the N-terminus, the 820-residue chain is Cation/H(+) antiporter 17 (820 aa).

12 helical membrane passes run Leu-30 to Leu-50, Arg-58 to Gly-75, Leu-90 to Leu-110, Ala-124 to Phe-144, Phe-159 to Leu-179, Ile-192 to Val-212, Leu-222 to Val-242, Phe-276 to Phe-296, Leu-313 to Ala-333, Gly-342 to Val-362, Leu-374 to Gly-394, and Ile-404 to Leu-424. A phosphoserine mark is found at Ser-817 and Ser-819.

Belongs to the monovalent cation:proton antiporter 2 (CPA2) transporter (TC 2.A.37) family. CHX (TC 2.A.37.4) subfamily. Predominantly expressed in epidermal and cortical cells of mature roots but also barely detected in leaves.

It localises to the membrane. Functionally, operates as a K(+)/H(+) antiporter that controls K(+) acquisition and homeostasis. The polypeptide is Cation/H(+) antiporter 17 (CHX17) (Arabidopsis thaliana (Mouse-ear cress)).